Here is a 330-residue protein sequence, read N- to C-terminus: Polygalacturonase inhibitor 1 (330 aa).

The signal sequence occupies residues 1 to 21; the sequence is MDKTATLCLLFLFTFLTTCLS. Cystine bridges form between Cys25/Cys55 and Cys56/Cys63. 10 LRR repeats span residues 69–93, 94–117, 118–142, 143–166, 167–189, 191–215, 217–237, 238–260, 261–285, and 287–309; these read NHRV…VGDL, PYLE…TIAK, LKNL…ISQL, KNLE…LSTL, PKIL…SFGS, PGTV…LGNI, FNRI…LFGS, NKTT…KVDI, PKTL…WTEA, and LQFF…KLQT. Asn106 and Asn130 each carry an N-linked (GlcNAc...) asparagine glycan. Asn238 is a glycosylation site (N-linked (GlcNAc...) asparagine). Residue Asn291 is glycosylated (N-linked (GlcNAc...) asparagine). 2 disulfides stabilise this stretch: Cys298–Cys320 and Cys322–Cys329.

Belongs to the polygalacturonase-inhibiting protein family.

It localises to the secreted. The protein localises to the cell wall. Its subcellular location is the membrane. In terms of biological role, inhibitor of fungal polygalacturonase. It is an important factor for plant resistance to phytopathogenic fungi. This Arabidopsis thaliana (Mouse-ear cress) protein is Polygalacturonase inhibitor 1 (PGIP1).